Here is a 244-residue protein sequence, read N- to C-terminus: Gamma-gliadin (244 aa).

Residues 18-64 (QQPFLQQPQQPSPQPQQVVQIISPATPTTIPSAGKPTSAPFPQQQQQ) are disordered. The span at 35–48 (VVQIISPATPTTIP) shows a compositional bias: polar residues.

The protein belongs to the gliadin/glutenin family.

Its function is as follows. Gliadin is the major seed storage protein in wheat. The protein is Gamma-gliadin of Triticum aestivum (Wheat).